We begin with the raw amino-acid sequence, 648 residues long: Biosynthetic arginine decarboxylase (648 aa).

Lysine 109 is subject to N6-(pyridoxal phosphate)lysine. Substrate is bound at residue 291-301 (IDVGGGLGIDF).

The protein belongs to the Orn/Lys/Arg decarboxylase class-II family. SpeA subfamily. It depends on Mg(2+) as a cofactor. Requires pyridoxal 5'-phosphate as cofactor.

The catalysed reaction is L-arginine + H(+) = agmatine + CO2. The protein operates within amine and polyamine biosynthesis; agmatine biosynthesis; agmatine from L-arginine: step 1/1. Functionally, catalyzes the biosynthesis of agmatine from arginine. This Prochlorococcus marinus (strain AS9601) protein is Biosynthetic arginine decarboxylase.